The primary structure comprises 240 residues: Pyridoxine 5'-phosphate synthase (240 aa).

Residue Asn7 coordinates 3-amino-2-oxopropyl phosphate. A 1-deoxy-D-xylulose 5-phosphate-binding site is contributed by 9-10 (DH). A 3-amino-2-oxopropyl phosphate-binding site is contributed by Arg18. His43 functions as the Proton acceptor in the catalytic mechanism. Arg45 and His50 together coordinate 1-deoxy-D-xylulose 5-phosphate. Residue Glu70 is the Proton acceptor of the active site. Thr100 contributes to the 1-deoxy-D-xylulose 5-phosphate binding site. The Proton donor role is filled by His191. Residues Gly192 and 213-214 (GH) contribute to the 3-amino-2-oxopropyl phosphate site.

It belongs to the PNP synthase family. As to quaternary structure, homooctamer; tetramer of dimers.

The protein localises to the cytoplasm. The enzyme catalyses 3-amino-2-oxopropyl phosphate + 1-deoxy-D-xylulose 5-phosphate = pyridoxine 5'-phosphate + phosphate + 2 H2O + H(+). It functions in the pathway cofactor biosynthesis; pyridoxine 5'-phosphate biosynthesis; pyridoxine 5'-phosphate from D-erythrose 4-phosphate: step 5/5. Its function is as follows. Catalyzes the complicated ring closure reaction between the two acyclic compounds 1-deoxy-D-xylulose-5-phosphate (DXP) and 3-amino-2-oxopropyl phosphate (1-amino-acetone-3-phosphate or AAP) to form pyridoxine 5'-phosphate (PNP) and inorganic phosphate. The chain is Pyridoxine 5'-phosphate synthase from Synechococcus elongatus (strain ATCC 33912 / PCC 7942 / FACHB-805) (Anacystis nidulans R2).